The chain runs to 78 residues: U-scoloptoxin(13)-Er1a (78 aa).

The first 24 residues, 1–24 (MFPSWSTTFVLCMGLCSLMNGALA), serve as a signal peptide directing secretion.

This sequence belongs to the scoloptoxin-13 family. In terms of processing, contains 4 disulfide bonds. In terms of tissue distribution, expressed by the venom gland.

The protein resides in the secreted. In Ethmostigmus rubripes (Giant centipede), this protein is U-scoloptoxin(13)-Er1a.